The chain runs to 396 residues: Putative F-box protein At4g22660 (396 aa).

One can recognise an F-box domain in the interval 7 to 58; sequence PNTWSDLPLDLLNLVFKRLSFANFRQAKSVCSSWYSASKQSVPKNQIPWLML.

The sequence is that of Putative F-box protein At4g22660 from Arabidopsis thaliana (Mouse-ear cress).